A 558-amino-acid chain; its full sequence is Laccase-4 (558 aa).

Positions 1 to 24 are cleaved as a signal peptide; sequence MGSHMVWFLFLVSFFSVFPAPSES. Plastocyanin-like domains follow at residues 32–148 and 158–308; these read NVVM…PKRG and NEKV…YSGT. 2 N-linked (GlcNAc...) asparagine glycosylation sites follow: asparagine 37 and asparagine 78. Cu cation is bound by residues histidine 82 and histidine 84. An N-linked (GlcNAc...) asparagine glycan is attached at asparagine 114. 2 residues coordinate Cu cation: histidine 127 and histidine 129. 9 N-linked (GlcNAc...) asparagine glycosylation sites follow: asparagine 187, asparagine 296, asparagine 323, asparagine 330, asparagine 373, asparagine 383, asparagine 400, asparagine 418, and asparagine 441. One can recognise a Plastocyanin-like 3 domain in the interval 408–542; the sequence is DFPKNPPHVF…KMAFLVENGK (135 aa). Histidine 459, histidine 462, and histidine 464 together coordinate Cu cation. The N-linked (GlcNAc...) asparagine glycan is linked to asparagine 479. Cu cation-binding residues include histidine 521, cysteine 522, histidine 523, and histidine 527. Residue asparagine 545 is glycosylated (N-linked (GlcNAc...) asparagine).

It belongs to the multicopper oxidase family. Cu cation is required as a cofactor. Ubiquitous, with higher levels in the inflorescence stem.

The protein localises to the secreted. It localises to the extracellular space. Its subcellular location is the apoplast. The enzyme catalyses 4 hydroquinone + O2 = 4 benzosemiquinone + 2 H2O. Its function is as follows. Lignin degradation and detoxification of lignin-derived products. Required for secondary xylem cell wall lignification. This chain is Laccase-4 (IRX12), found in Arabidopsis thaliana (Mouse-ear cress).